A 1377-amino-acid chain; its full sequence is Protein RhsA (1377 aa).

28 consecutive repeat copies span residues 330-352 (GKQV…HRHT), 353-374 (GRPE…LNPA), 375-417 (GLSY…EHAD), 418-438 (GSVT…TDAA), 439-460 (GRTT…TTPD), 461-481 (GRAS…TGPD), 482-502 (GLEL…TAPD), 503-525 (GDIT…EDAT), 526-546 (GSRK…TDCS), 547-567 (GYVT…HREE), 568-588 (GLSQ…KDTQ), 589-609 (GHET…IAPD), 610-629 (GSRN…TTQG), 630-650 (GLTR…TSEN), 651-671 (GSHT…TGFD), 672-691 (GRTQ…SEDE), 692-711 (GLVT…RTVK), 712-734 (GETA…HISE), 735-758 (GHRV…QTVH), 808-828 (GDTP…LRSF), 829-850 (GRYE…HLNS), 851-871 (LLSD…ISSP), 872-894 (RQTR…TAAN), 895-930 (LDIR…NRIA), 931-959 (RDAH…VIRT), 960-984 (DDER…TQYE), 985-1019 (EPLV…MSLS), and 1162-1186 (GTTE…HQLQ). A 28 X approximate tandem repeats region spans residues 330–1186 (GKQVRSFTYD…LNEENPHQLQ (857 aa)). The tract at residues 1356 to 1377 (DAKSTQKAWNCRHSRQSNDKKR) is disordered.

It belongs to the RHS family.

Functionally, rhs elements have a nonessential function. They may play an important role in the natural ecology of the cell. This Escherichia coli (strain K12) protein is Protein RhsA (rhsA).